The primary structure comprises 305 residues: Oxygen-dependent coproporphyrinogen-III oxidase (305 aa).

Ser99 contacts substrate. A divalent metal cation contacts are provided by His103 and His113. The active-site Proton donor is the His113. 115–117 (NVR) is a binding site for substrate. The a divalent metal cation site is built by His152 and His182. The segment at 247–282 (YVEFNLVLDRGTLFGLQTGGRTESILMSMPPLARWE) is important for dimerization. 265–267 (GGR) provides a ligand contact to substrate.

The protein belongs to the aerobic coproporphyrinogen-III oxidase family. In terms of assembly, homodimer. A divalent metal cation serves as cofactor.

It localises to the cytoplasm. The enzyme catalyses coproporphyrinogen III + O2 + 2 H(+) = protoporphyrinogen IX + 2 CO2 + 2 H2O. Its pathway is porphyrin-containing compound metabolism; protoporphyrin-IX biosynthesis; protoporphyrinogen-IX from coproporphyrinogen-III (O2 route): step 1/1. Its function is as follows. Involved in the heme biosynthesis. Catalyzes the aerobic oxidative decarboxylation of propionate groups of rings A and B of coproporphyrinogen-III to yield the vinyl groups in protoporphyrinogen-IX. The sequence is that of Oxygen-dependent coproporphyrinogen-III oxidase from Vibrio cholerae serotype O1 (strain ATCC 39541 / Classical Ogawa 395 / O395).